We begin with the raw amino-acid sequence, 300 residues long: Sulfate adenylyltransferase subunit 2 (300 aa).

The interval 281-300 is disordered; sequence RAIDRDEAGSMEKKKREGYF.

It belongs to the PAPS reductase family. CysD subfamily. Heterodimer composed of CysD, the smaller subunit, and CysN.

It catalyses the reaction sulfate + ATP + H(+) = adenosine 5'-phosphosulfate + diphosphate. It participates in sulfur metabolism; hydrogen sulfide biosynthesis; sulfite from sulfate: step 1/3. In terms of biological role, with CysN forms the ATP sulfurylase (ATPS) that catalyzes the adenylation of sulfate producing adenosine 5'-phosphosulfate (APS) and diphosphate, the first enzymatic step in sulfur assimilation pathway. APS synthesis involves the formation of a high-energy phosphoric-sulfuric acid anhydride bond driven by GTP hydrolysis by CysN coupled to ATP hydrolysis by CysD. The polypeptide is Sulfate adenylyltransferase subunit 2 (Brucella melitensis biotype 2 (strain ATCC 23457)).